Consider the following 156-residue polypeptide: Small ribosomal subunit protein uS7 (156 aa).

The protein belongs to the universal ribosomal protein uS7 family. In terms of assembly, part of the 30S ribosomal subunit. Contacts proteins S9 and S11.

In terms of biological role, one of the primary rRNA binding proteins, it binds directly to 16S rRNA where it nucleates assembly of the head domain of the 30S subunit. Is located at the subunit interface close to the decoding center, probably blocks exit of the E-site tRNA. In Bifidobacterium longum (strain NCC 2705), this protein is Small ribosomal subunit protein uS7.